The sequence spans 180 residues: Large ribosomal subunit protein uL6c (180 aa).

This sequence belongs to the universal ribosomal protein uL6 family. In terms of assembly, part of the 50S ribosomal subunit.

Its subcellular location is the plastid. The protein localises to the chloroplast. Functionally, binds 23S rRNA. This chain is Large ribosomal subunit protein uL6c (rpl6), found in Porphyra purpurea (Red seaweed).